An 88-amino-acid polypeptide reads, in one-letter code: MPNIKSAIKRTKTNNERRAHNATIKSAMRTAMKQVETFVSNNEADKAKAALSAAAKKIDKAAKKGLVHKNTAARYKSNLAKKVNGLSA.

It belongs to the bacterial ribosomal protein bS20 family.

Binds directly to 16S ribosomal RNA. The chain is Small ribosomal subunit protein bS20 from Bacillus licheniformis (strain ATCC 14580 / DSM 13 / JCM 2505 / CCUG 7422 / NBRC 12200 / NCIMB 9375 / NCTC 10341 / NRRL NRS-1264 / Gibson 46).